A 726-amino-acid chain; its full sequence is Catalase-peroxidase (726 aa).

A disordered region spans residues 1–33 (MSTTDDTHNTLSAGKCPFHQGGHDRSAGAGTAS). Residues 105-226 (WHGAGTYRSI…LGATEMGLIY (122 aa)) constitute a cross-link (tryptophyl-tyrosyl-methioninium (Trp-Tyr) (with M-252)). His-106 (proton acceptor) is an active-site residue. A cross-link (tryptophyl-tyrosyl-methioninium (Tyr-Met) (with W-105)) is located at residues 226 to 252 (YVNPEGPDHSGEPLSAAAAIRATFGNM). Position 267 (His-267) interacts with heme b.

It belongs to the peroxidase family. Peroxidase/catalase subfamily. As to quaternary structure, homodimer or homotetramer. It depends on heme b as a cofactor. Post-translationally, formation of the three residue Trp-Tyr-Met cross-link is important for the catalase, but not the peroxidase activity of the enzyme.

The enzyme catalyses H2O2 + AH2 = A + 2 H2O. The catalysed reaction is 2 H2O2 = O2 + 2 H2O. Bifunctional enzyme with both catalase and broad-spectrum peroxidase activity. This Salmonella arizonae (strain ATCC BAA-731 / CDC346-86 / RSK2980) protein is Catalase-peroxidase.